The sequence spans 569 residues: Glutamyl-tRNA reductase (569 aa).

Residues 49-52, S109, 114-116, and Q120 contribute to the substrate site; these read TCNR and EGQ. The Nucleophile role is filled by C50. 192–197 provides a ligand contact to NADP(+); that stretch reads GAGSMS. The tract at residues 284–397 is insert; that stretch reads PVAVREETPA…VEAPRPAPAL (114 aa). A disordered region spans residues 546-569; the sequence is AAVSRADDRDTSDSTENAKNRGRE. A compositionally biased stretch (basic and acidic residues) spans 550-569; the sequence is RADDRDTSDSTENAKNRGRE.

It belongs to the glutamyl-tRNA reductase family. Homodimer.

The enzyme catalyses (S)-4-amino-5-oxopentanoate + tRNA(Glu) + NADP(+) = L-glutamyl-tRNA(Glu) + NADPH + H(+). It functions in the pathway porphyrin-containing compound metabolism; protoporphyrin-IX biosynthesis; 5-aminolevulinate from L-glutamyl-tRNA(Glu): step 1/2. In terms of biological role, catalyzes the NADPH-dependent reduction of glutamyl-tRNA(Glu) to glutamate 1-semialdehyde (GSA). This Streptomyces avermitilis (strain ATCC 31267 / DSM 46492 / JCM 5070 / NBRC 14893 / NCIMB 12804 / NRRL 8165 / MA-4680) protein is Glutamyl-tRNA reductase.